Reading from the N-terminus, the 308-residue chain is MSQAVQTNGTQPLSKTWELSLYELQRTPQEAITDGLEIVVSPRSLHSELMCPICLDMLKNTMTTKECLHRFCADCIITALRSGNKECPTCRKKLVSKRSLRPDPNFDALISKIYPSRDEYEAHQERVLARINKHNNQQALSHSIEEGLKIQAMNRLQRGKKQQIENGSGAEDNGDSSHCSNASTHSNQEAGPSNKRTKTSDDSGLELDNNNAAVAIDPVMDGASEIELVFRPHPTLMEKDDSAQTRYIKTSGNATVDHLSKYLAVRLALEELRSKGESNQMNLDTASEKQYTIYIATASGQFTVSICQ.

S2 carries the post-translational modification N-acetylserine. Residues 2–179 (SQAVQTNGTQ…AEDNGDSSHC (178 aa)) form an interaction with HIP2 region. S41 is modified (phosphoserine). An RING-type zinc finger spans residues 51 to 91 (CPICLDMLKNTMTTKECLHRFCADCIITALRSGNKECPTCR). Positions 93–98 (KLVSKR) are interaction with nucleosomes via an acidic patch on histone H2A and histone H2B. K112 is covalently cross-linked (Glycyl lysine isopeptide (Lys-Gly) (interchain with G-Cter in ubiquitin)). S143 and S168 each carry phosphoserine. A disordered region spans residues 157–206 (QRGKKQQIENGSGAEDNGDSSHCSNASTHSNQEAGPSNKRTKTSDDSGLE). The span at 176-191 (SSHCSNASTHSNQEAG) shows a compositional bias: polar residues. Residue K249 forms a Glycyl lysine isopeptide (Lys-Gly) (interchain with G-Cter in SUMO2) linkage.

Component of chromatin-associated Polycomb (PcG) complexes. Component of a number of PRC1-like complexes; these complexes contain either the polycomb group ring finger protein PCGF1, or PCGF2, or PCGF3, or BMI1, or PCGF5, or PCGF6. Distinct PRC1-like complexes are composed of a RING1 subunit (RING1B or RING1A), one of the six PCGF proteins (PCGF1, PCGF2, PCGF3, BMI1, PCGF5 or PCGF6), one PHC protein (PHC1, PHC2 or PHC3) and one of the CBX proteins (CBX2, CBX4, CBX6, CBX7 or CBX8). Part of a complex that contains RNF2, UB2D3 and BMI1; within that complex RNF2 and BMI1 form a tight heterodimer, where UB2D3 interacts only with RNF2. The complex composed of RNF2, UB2D3 and BMI1 binds nucleosomes, and has activity only with nucleosomal histone H2A. Part of a complex that contains PCGF5, RNF2 and UBE2D3. Part of a complex that contains AUTS2, PCGF5, RNF2, CSNK2B and RYBP. Interacts with CBX6 and CBX8. Interacts with PHC1, PCGF2, RYBP, CBX7, CBX4, CBX2, RNF1/RING1, BMI1 and PHC2. Interaction with RYBP and CBX7 is mutually exclusive; both compete for the same binding site on RNF2. Component of repressive BCOR complex containing a Polycomb group subcomplex at least composed of RYBP, PCGF1, BCOR and RING1. Interacts with CBX2 and PHC1. Interacts with CHTOP. Interacts with AURKB. Part of the E2F6.com-1 complex in G0 phase composed of E2F6, MGA, MAX, TFDP1, CBX3, BAT8, EUHMTASE1, RNF1/RING1, RNF2/RING2, MBLR, L3MBTL2 and YAF2. Component of some MLL1/MLL complex, at least composed of the core components KMT2A/MLL1, ASH2L, HCFC1/HCF1, WDR5 and RBBP5, as well as the facultative components BACC1, CHD8, E2F6, HSP70, INO80C, KANSL1, LAS1L, MAX, MCRS1, MGA, MYST1/MOF, PELP1, PHF20, PRP31, RING2, RUVB1/TIP49A, RUVB2/TIP49B, SENP3, TAF1, TAF4, TAF6, TAF7, TAF9 and TEX10. Interacts with RYBP, HIP2 and TFCP2. Interacts with NUPR1. Interacts with SAMD7 in a PHC2-dependent manner. In terms of processing, monoubiquitinated, by auto-ubiquitination. Polyubiquitinated in the presence of UBE2D3 (in vitro).

The protein resides in the nucleus. Its subcellular location is the cytoplasm. It is found in the chromosome. It catalyses the reaction S-ubiquitinyl-[E2 ubiquitin-conjugating enzyme]-L-cysteine + [acceptor protein]-L-lysine = [E2 ubiquitin-conjugating enzyme]-L-cysteine + N(6)-ubiquitinyl-[acceptor protein]-L-lysine.. It participates in protein modification; protein ubiquitination. E3 ubiquitin-protein ligase that mediates monoubiquitination of 'Lys-119' of histone H2A (H2AK119Ub), thereby playing a central role in histone code and gene regulation. H2AK119Ub gives a specific tag for epigenetic transcriptional repression and participates in X chromosome inactivation of female mammals. May be involved in the initiation of both imprinted and random X inactivation. Essential component of a Polycomb group (PcG) multiprotein PRC1-like complex, a complex class required to maintain the transcriptionally repressive state of many genes, including Hox genes, throughout development. PcG PRC1 complex acts via chromatin remodeling and modification of histones, rendering chromatin heritably changed in its expressibility. E3 ubiquitin-protein ligase activity is enhanced by BMI1/PCGF4. Acts as the main E3 ubiquitin ligase on histone H2A of the PRC1 complex, while RING1 may rather act as a modulator of RNF2/RING2 activity. Plays a role in the transcriptional repression of genes that are required for pluripotency in embryonic stem cells, thereby contributing to differentiation of the ectodermal and endodermal germ layers. Association with the chromosomal DNA is cell-cycle dependent. In resting B- and T-lymphocytes, interaction with AURKB leads to block its activity, thereby maintaining transcription in resting lymphocytes. Also acts as a negative regulator of autophagy by mediating ubiquitination of AMBRA1, leading to its subsequent degradation. The sequence is that of E3 ubiquitin-protein ligase RING2 (Rnf2) from Rattus norvegicus (Rat).